The primary structure comprises 345 residues: Quinolinate synthase (345 aa).

Residues His69 and Ser87 each contribute to the iminosuccinate site. Cys132 contributes to the [4Fe-4S] cluster binding site. Iminosuccinate contacts are provided by residues 158–160 and Ser175; that span reads YVN. Position 217 (Cys217) interacts with [4Fe-4S] cluster. Iminosuccinate is bound by residues 243–245 and Thr260; that span reads HPE. Position 303 (Cys303) interacts with [4Fe-4S] cluster.

Belongs to the quinolinate synthase family. Type 2 subfamily. The cofactor is [4Fe-4S] cluster.

The protein resides in the cytoplasm. It carries out the reaction iminosuccinate + dihydroxyacetone phosphate = quinolinate + phosphate + 2 H2O + H(+). Its pathway is cofactor biosynthesis; NAD(+) biosynthesis; quinolinate from iminoaspartate: step 1/1. Its function is as follows. Catalyzes the condensation of iminoaspartate with dihydroxyacetone phosphate to form quinolinate. This is Quinolinate synthase from Agrobacterium fabrum (strain C58 / ATCC 33970) (Agrobacterium tumefaciens (strain C58)).